Here is a 503-residue protein sequence, read N- to C-terminus: ATP synthase subunit alpha (503 aa).

Residue 170 to 177 (GDRKTGKT) coordinates ATP.

Belongs to the ATPase alpha/beta chains family. As to quaternary structure, F-type ATPases have 2 components, CF(1) - the catalytic core - and CF(0) - the membrane proton channel. CF(1) has five subunits: alpha(3), beta(3), gamma(1), delta(1), epsilon(1). CF(0) has four main subunits: a, b, b' and c.

It is found in the cellular thylakoid membrane. It catalyses the reaction ATP + H2O + 4 H(+)(in) = ADP + phosphate + 5 H(+)(out). Functionally, produces ATP from ADP in the presence of a proton gradient across the membrane. The alpha chain is a regulatory subunit. This is ATP synthase subunit alpha from Gloeothece citriformis (strain PCC 7424) (Cyanothece sp. (strain PCC 7424)).